A 197-amino-acid chain; its full sequence is Recombination protein RecR (197 aa).

The segment at 56–71 adopts a C4-type zinc-finger fold; it reads CERCNTFTETEICQRC. Residues 79 to 174 enclose the Toprim domain; it reads SLLCVVEMPA…RVSRLSRGVP (96 aa).

The protein belongs to the RecR family.

Its function is as follows. May play a role in DNA repair. It seems to be involved in an RecBC-independent recombinational process of DNA repair. It may act with RecF and RecO. The sequence is that of Recombination protein RecR from Aromatoleum aromaticum (strain DSM 19018 / LMG 30748 / EbN1) (Azoarcus sp. (strain EbN1)).